The sequence spans 163 residues: NADH-quinone oxidoreductase subunit I (163 aa).

4Fe-4S ferredoxin-type domains are found at residues 54-84 and 94-123; these read LRRY…IDSA and TRYD…ETHI. [4Fe-4S] cluster contacts are provided by Cys64, Cys67, Cys70, Cys74, Cys103, Cys106, Cys109, and Cys113.

Belongs to the complex I 23 kDa subunit family. As to quaternary structure, NDH-1 is composed of 14 different subunits. Subunits NuoA, H, J, K, L, M, N constitute the membrane sector of the complex. [4Fe-4S] cluster serves as cofactor.

It is found in the cell inner membrane. It carries out the reaction a quinone + NADH + 5 H(+)(in) = a quinol + NAD(+) + 4 H(+)(out). NDH-1 shuttles electrons from NADH, via FMN and iron-sulfur (Fe-S) centers, to quinones in the respiratory chain. The immediate electron acceptor for the enzyme in this species is believed to be ubiquinone. Couples the redox reaction to proton translocation (for every two electrons transferred, four hydrogen ions are translocated across the cytoplasmic membrane), and thus conserves the redox energy in a proton gradient. The protein is NADH-quinone oxidoreductase subunit I of Xylella fastidiosa (strain 9a5c).